A 419-amino-acid polypeptide reads, in one-letter code: MPYLFTSESVSEGHPDKVADQISDALIDHFLAFDPNAKVACETLVTTGQVVLAGEVKSKAYLDVQEIAREVIRKIGYTKSEYMFEANSCGIFSAIHEQSADINQGVDRKKKEEQGAGDQGMMFGYATNETNDYMPLALDLAHKLLIELAALRREGKQIKYLRPDAKSQVTLEYDDNNRPVRIDAIVLSTQHDDFDTEEKMHKKIEKDIVSILIPRIVSKYPKYKKFFDGKTKIKYHINPTGKFVIGGPHGDTGLTGRKIIVDTYGGKGAHGGGAFSGKDPSKVDRSAAYATRHIAKNLVAAGLCDEVLVQVSYAIGVAKPMGIYVNTYGTAKVKKNDGEIAKIVEKLFDMRPYAIEQRLQLRNPIYSETAAYGHMGRKPETVTKSFKSNDGKIIKKKVELFTWEKLDYVDKVRKAFGIK.

H14 contributes to the ATP binding site. Residue D16 participates in Mg(2+) binding. Residue E42 participates in K(+) binding. L-methionine-binding residues include E55 and Q98. The interval 98 to 108 (QSADINQGVDR) is flexible loop. Residues 164 to 166 (DAK), 242 to 243 (KF), D251, 257 to 258 (RK), A274, and K278 contribute to the ATP site. D251 lines the L-methionine pocket. Residue K282 participates in L-methionine binding.

This sequence belongs to the AdoMet synthase family. In terms of assembly, homotetramer; dimer of dimers. Mg(2+) serves as cofactor. Requires K(+) as cofactor.

It is found in the cytoplasm. It catalyses the reaction L-methionine + ATP + H2O = S-adenosyl-L-methionine + phosphate + diphosphate. It participates in amino-acid biosynthesis; S-adenosyl-L-methionine biosynthesis; S-adenosyl-L-methionine from L-methionine: step 1/1. Its function is as follows. Catalyzes the formation of S-adenosylmethionine (AdoMet) from methionine and ATP. The overall synthetic reaction is composed of two sequential steps, AdoMet formation and the subsequent tripolyphosphate hydrolysis which occurs prior to release of AdoMet from the enzyme. This Cytophaga hutchinsonii (strain ATCC 33406 / DSM 1761 / CIP 103989 / NBRC 15051 / NCIMB 9469 / D465) protein is S-adenosylmethionine synthase.